A 209-amino-acid polypeptide reads, in one-letter code: NADH-ubiquinone oxidoreductase subunit 9 (209 aa).

Belongs to the complex I 30 kDa subunit family. As to quaternary structure, complex I is composed of about 30 different subunits.

It is found in the mitochondrion inner membrane. It carries out the reaction a ubiquinone + NADH + 5 H(+)(in) = a ubiquinol + NAD(+) + 4 H(+)(out). Functionally, core subunit of the mitochondrial membrane respiratory chain NADH dehydrogenase (Complex I) that is believed to belong to the minimal assembly required for catalysis. Complex I functions in the transfer of electrons from NADH to the respiratory chain. The immediate electron acceptor for the enzyme is believed to be ubiquinone. The polypeptide is NADH-ubiquinone oxidoreductase subunit 9 (NAD9) (Paramecium tetraurelia).